Reading from the N-terminus, the 115-residue chain is MAKPEPDVVIPEGDSSKGAKLFKSKCAQCHTINKGGSVKQGPNLYGFYGRKSGASDYAYSDANKNSGIVWSDKHLFVYLVNPKQYIPGTKMVFAGLKKEQDRADLIAYLKEASSK.

The heme c site is built by Cys-26, Cys-29, His-30, and Met-91.

Belongs to the cytochrome c family. In terms of processing, binds 1 heme c group covalently per subunit.

It localises to the mitochondrion intermembrane space. Electron carrier protein. The oxidized form of the cytochrome c heme group can accept an electron from the heme group of the cytochrome c1 subunit of cytochrome reductase. Cytochrome c then transfers this electron to the cytochrome oxidase complex, the final protein carrier in the mitochondrial electron-transport chain. The protein is Cytochrome c of Theileria parva (East coast fever infection agent).